We begin with the raw amino-acid sequence, 333 residues long: Olfactory receptor 1078 (333 aa).

At 1-25 the chain is on the extracellular side; sequence MDSSNRTRVSEFLLLGFVENKDLQP. An N-linked (GlcNAc...) asparagine glycan is attached at Asn5. Residues 26–50 traverse the membrane as a helical segment; it reads LIYGLFLSMYLVTVIGNISIIVAII. At 51 to 57 the chain is on the cytoplasmic side; sequence SDPCLHT. Residues 58 to 79 form a helical membrane-spanning segment; that stretch reads PMYFFLSNLSFVDICFISTTVP. Over 80-100 the chain is Extracellular; it reads KMLVNIQTQNNVITYAGCITQ. Cys97 and Cys189 are joined by a disulfide. The chain crosses the membrane as a helical span at residues 101-120; that stretch reads IYFFLLFVELDNFLLTIMAY. The Cytoplasmic portion of the chain corresponds to 121–139; sequence DRYVAICHPMHYTVIMNYK. A helical membrane pass occupies residues 140–158; sequence LCGFLVLVSWIVSVLHALF. Over 159–196 the chain is Extracellular; sequence QSLMMLALPFCTHLEIPHYFCEPNQVIQLTCSDAFLND. The helical transmembrane segment at 197 to 219 threads the bilayer; sequence LVIYFTLVLLATVPLAGIFYSYF. Over 220 to 236 the chain is Cytoplasmic; it reads KIVSSICAISSVHGKYK. A helical transmembrane segment spans residues 237 to 260; sequence AFSTCASHLSVVSLFYCTGLGVYL. Over 261-272 the chain is Extracellular; sequence SSAANNSSQASA. The helical transmembrane segment at 273 to 292 threads the bilayer; that stretch reads TASVMYTVVTPMVNPFIYSL. Over 293–333 the chain is Cytoplasmic; sequence RNKDVKSVLKKTLCEEVIRSPPSLLHFFLVLCHLPCFIFCY.

Belongs to the G-protein coupled receptor 1 family. As to expression, olfactory epithelium.

The protein resides in the cell membrane. In terms of biological role, odorant receptor. This Rattus norvegicus (Rat) protein is Olfactory receptor 1078 (Olr1078).